A 339-amino-acid chain; its full sequence is Uracil nucleotide/cysteinyl leukotriene receptor (339 aa).

Over 1-36 the chain is Extracellular; sequence MDGLETALPSLTDNASLAYSEQCGQETPLENMLFAC. A glycan (N-linked (GlcNAc...) asparagine) is linked at Asn-14. Residues 37–57 traverse the membrane as a helical segment; the sequence is FYLLDFILAFVGNALALWLFI. At 58 to 64 the chain is on the cytoplasmic side; sequence WDHKSGT. Residues 65–85 traverse the membrane as a helical segment; sequence PANVFLMHLAVADLSCVLVLP. The Extracellular portion of the chain corresponds to 86-105; that stretch reads TRLVYHFSGNHWPFGEIPCR. An intrachain disulfide couples Cys-104 to Cys-181. Residues 106–126 form a helical membrane-spanning segment; it reads LTGFLFYLNMYASIYFLTCIS. The Cytoplasmic segment spans residues 127–147; sequence ADRFLAIVHPVKSLKLRRPLY. A helical membrane pass occupies residues 148–168; that stretch reads AHLACAFLWIVVAVAMAPLLV. The Extracellular segment spans residues 169-195; sequence SPQTVQTNHTVVCLQLYREKASHHALA. N-linked (GlcNAc...) asparagine glycosylation is present at Asn-176. The helical transmembrane segment at 196 to 216 threads the bilayer; sequence SLAVAFTFPFITTVTCYLLII. Topologically, residues 217-232 are cytoplasmic; sequence RSLRQGPRIEKHLKNK. Residues 233–253 form a helical membrane-spanning segment; sequence AVRMIAMVLAIFLICFVPYHI. At 254-280 the chain is on the extracellular side; it reads HRSVYVLHYRGGGTSCSAQRALALGNR. Residues 281–301 traverse the membrane as a helical segment; that stretch reads ITSCLTSLNGALDPVMYFFVA. The Cytoplasmic segment spans residues 302-339; sequence EKFRHALCNLLCSKRLTGPPPSFEGKTNESSLSARSEL.

This sequence belongs to the G-protein coupled receptor 1 family. In terms of tissue distribution, expressed in brain, kidney, and heart. Highest level in brain.

Its subcellular location is the cell membrane. Its function is as follows. Dual specificity receptor for uracil nucleotides and cysteinyl leukotrienes (CysLTs). Signals through G(i) and inhibition of adenylyl cyclase. May mediate brain damage by nucleotides and CysLTs following ischemia. This Rattus norvegicus (Rat) protein is Uracil nucleotide/cysteinyl leukotriene receptor.